We begin with the raw amino-acid sequence, 339 residues long: Tetraacyldisaccharide 4'-kinase (339 aa).

62–69 contacts ATP; that stretch reads VAGGTGKT.

Belongs to the LpxK family.

The enzyme catalyses a lipid A disaccharide + ATP = a lipid IVA + ADP + H(+). The protein operates within glycolipid biosynthesis; lipid IV(A) biosynthesis; lipid IV(A) from (3R)-3-hydroxytetradecanoyl-[acyl-carrier-protein] and UDP-N-acetyl-alpha-D-glucosamine: step 6/6. In terms of biological role, transfers the gamma-phosphate of ATP to the 4'-position of a tetraacyldisaccharide 1-phosphate intermediate (termed DS-1-P) to form tetraacyldisaccharide 1,4'-bis-phosphate (lipid IVA). In Xylella fastidiosa (strain M12), this protein is Tetraacyldisaccharide 4'-kinase.